A 1082-amino-acid chain; its full sequence is Probable arabinosyltransferase B (1082 aa).

13 helical membrane passes run 28-50 (WVATIAGLLGFVLSVSIPLLPVT), 223-241 (LAAMLLAIVSTVIALLALW), 262-281 (VTAVDGVVVGGMAIWYVIGA), 333-352 (SIWIRLPDLICALICWLLLS), 359-381 (LGPAVAGSRAAMWAAGLVLLGAW), 420-442 (AITTAAFTLGIQPTGLIAVAALL), 462-481 (WPLIAPLLAAGTVILAVVFA), 522-544 (AISRRVAFVFTAMCLFPSLFMML), 557-574 (AWRLMGIIFATMFFLMFT), 578-600 (WTHHFGLFAAVGGAMAALATVLV), 613-635 (AFLSLVLFVLAFCFASTNGWWYV), 650-672 (GGVQISAIFFALSAIAALWAFWL), and 689-711 (APIPVAAGFMVVVMMASMAIGVV).

The protein belongs to the emb family.

The protein resides in the cell membrane. Arabinosyl transferase responsible for the polymerization of arabinose into the arabinan of arabinogalactan. This chain is Probable arabinosyltransferase B (embB), found in Mycolicibacterium smegmatis (Mycobacterium smegmatis).